Consider the following 301-residue polypeptide: WD repeat-containing protein SL1-17 (301 aa).

WD repeat units lie at residues 11–54, 59–98, 101–140, 143–182, 184–223, 227–266, and 269–300; these read AHKE…LKCL, GHRL…LTKT, GDPA…KEGS, LEGK…VQFL, GHAT…LVIP, GHKG…EKHC, and THED…IYQC.

The polypeptide is WD repeat-containing protein SL1-17 (Schistosoma mansoni (Blood fluke)).